A 252-amino-acid chain; its full sequence is DNA-directed RNA polymerase III subunit rpc8 (252 aa).

The tract at residues 214 to 252 (WTNQSAGDDDENEEDGGENQDDEVAEDDGGEEPTIEEDE) is disordered. The span at 220-252 (GDDDENEEDGGENQDDEVAEDDGGEEPTIEEDE) shows a compositional bias: acidic residues.

It belongs to the eukaryotic RPB7/RPC8 RNA polymerase subunit family. As to quaternary structure, component of the RNA polymerase III (Pol III) complex consisting of several subunits.

The protein localises to the nucleus. Its function is as follows. DNA-dependent RNA polymerase catalyzes the transcription of DNA into RNA using the four ribonucleoside triphosphates as substrates. The polypeptide is DNA-directed RNA polymerase III subunit rpc8 (polr3h-1) (Dictyostelium discoideum (Social amoeba)).